We begin with the raw amino-acid sequence, 124 residues long: UPF0102 protein TM1040_0449 (124 aa).

It belongs to the UPF0102 family.

This chain is UPF0102 protein TM1040_0449, found in Ruegeria sp. (strain TM1040) (Silicibacter sp.).